The following is a 399-amino-acid chain: Probable sugar efflux transporter (399 aa).

The next 12 membrane-spanning stretches (helical) occupy residues 15–35 (VVTL…PVGL), 50–70 (VGMM…PFML), 81–101 (LIGL…AWNF), 103–123 (VLVI…SITS), 136–156 (AQAL…GIPI), 168–188 (MTFL…VKLL), 209–229 (PALV…YTAY), 246–266 (FATV…ILFG), 273–293 (ASGL…LLLP), 301–321 (LMLL…GMQV), 333–353 (VAMS…ALVG), and 364–384 (SVGY…LMIF).

Belongs to the major facilitator superfamily. SotB (TC 2.A.1.2) family.

It localises to the cell inner membrane. Involved in the efflux of sugars. The physiological role may be the reduction of the intracellular concentration of toxic sugars or sugar metabolites. In Klebsiella pneumoniae subsp. pneumoniae (strain ATCC 700721 / MGH 78578), this protein is Probable sugar efflux transporter.